Here is a 119-residue protein sequence, read N- to C-terminus: MVRVKRGNVARKRRKKILKLAKGFRGSHSKLFTAANQQVMKALRNAYRHRRTKKRDFRSLWIVRINAQARTEGLSYSRLIDGLHKADVALNRKMLAQLAVTDPEAFAEVARVAKSARPV.

It belongs to the bacterial ribosomal protein bL20 family.

In terms of biological role, binds directly to 23S ribosomal RNA and is necessary for the in vitro assembly process of the 50S ribosomal subunit. It is not involved in the protein synthesizing functions of that subunit. The sequence is that of Large ribosomal subunit protein bL20 from Gloeobacter violaceus (strain ATCC 29082 / PCC 7421).